Consider the following 187-residue polypeptide: F-box protein At5g41720 (187 aa).

The F-box domain maps to 2–49 (MMNSPLDYDVLLEIMSYCPATEMAKFRLLSKECNKRSYEMSFINRHLH).

In Arabidopsis thaliana (Mouse-ear cress), this protein is F-box protein At5g41720.